Here is a 427-residue protein sequence, read N- to C-terminus: Serine--tRNA ligase (427 aa).

Position 231 to 233 (231 to 233 (TAE)) interacts with L-serine. 262 to 264 (RSE) contacts ATP. Glu285 is an L-serine binding site. 349–352 (EISS) contacts ATP. Ser385 is a binding site for L-serine.

This sequence belongs to the class-II aminoacyl-tRNA synthetase family. Type-1 seryl-tRNA synthetase subfamily. In terms of assembly, homodimer. The tRNA molecule binds across the dimer.

Its subcellular location is the cytoplasm. It catalyses the reaction tRNA(Ser) + L-serine + ATP = L-seryl-tRNA(Ser) + AMP + diphosphate + H(+). The catalysed reaction is tRNA(Sec) + L-serine + ATP = L-seryl-tRNA(Sec) + AMP + diphosphate + H(+). The protein operates within aminoacyl-tRNA biosynthesis; selenocysteinyl-tRNA(Sec) biosynthesis; L-seryl-tRNA(Sec) from L-serine and tRNA(Sec): step 1/1. Its function is as follows. Catalyzes the attachment of serine to tRNA(Ser). Is also able to aminoacylate tRNA(Sec) with serine, to form the misacylated tRNA L-seryl-tRNA(Sec), which will be further converted into selenocysteinyl-tRNA(Sec). In Brucella canis (strain ATCC 23365 / NCTC 10854 / RM-666), this protein is Serine--tRNA ligase.